The chain runs to 156 residues: Ribosomal RNA large subunit methyltransferase H (156 aa).

S-adenosyl-L-methionine contacts are provided by residues L73, G104, and 123–128 (LSALTL).

Belongs to the RNA methyltransferase RlmH family. Homodimer.

It localises to the cytoplasm. It carries out the reaction pseudouridine(1915) in 23S rRNA + S-adenosyl-L-methionine = N(3)-methylpseudouridine(1915) in 23S rRNA + S-adenosyl-L-homocysteine + H(+). Specifically methylates the pseudouridine at position 1915 (m3Psi1915) in 23S rRNA. In Vibrio vulnificus (strain CMCP6), this protein is Ribosomal RNA large subunit methyltransferase H.